A 391-amino-acid chain; its full sequence is Matrix metalloproteinase-23 (391 aa).

Topologically, residues 1-18 are cytoplasmic; the sequence is MGCRACLRPEASGAVQGR. A propeptide spanning residues 1-79 is cleaved from the precursor; the sequence is MGCRACLRPE…LTMSVTRRRR (79 aa). Residues 19–39 traverse the membrane as a helical segment; it reads WLGAALSGLCLLSALALLEWL. Over 40-391 the chain is Lumenal; that stretch reads GAPTETAWRA…TYSWRVRVRN (352 aa). N-linked (GlcNAc...) asparagine glycosylation is found at Asn93 and Asn149. Zn(2+) is bound at residue His212. Residue Glu213 is part of the active site. Residues His216 and His222 each coordinate Zn(2+). An N-linked (GlcNAc...) asparagine glycan is attached at Asn233. The ShKT domain occupies 256–290; that stretch reads CLDRIFVCASWARKGFCDVRQRLMKRLCPRSCDFC. 3 cysteine pairs are disulfide-bonded: Cys256–Cys290, Cys263–Cys283, and Cys272–Cys287. The 86-residue stretch at 298–383 folds into the Ig-like C2-type domain; sequence VATTTSPTRT…RRHQRVLSTY (86 aa). An N-linked (GlcNAc...) asparagine glycan is attached at Asn317. Cys322 and Cys371 are oxidised to a cystine.

This sequence belongs to the peptidase M10A family. Zn(2+) is required as a cofactor. Post-translationally, N-glycosylated. Proteolytic cleavage might yield an active form. Expressed at relatively high level in heart, lung and spleen. Not detected in brain, liver, skeletal muscle, kidney and testis.

It is found in the endoplasmic reticulum membrane. The protein localises to the membrane. Inhibited by TIMP2. Protease. May regulate the surface expression of some potassium channels by retaining them in the endoplasmic reticulum. The chain is Matrix metalloproteinase-23 (Mmp23) from Mus musculus (Mouse).